The sequence spans 505 residues: 2-methylcitrate dehydratase (505 aa).

The protein belongs to the PrpD family. As to quaternary structure, monomer.

It catalyses the reaction (2S,3S)-2-methylcitrate = 2-methyl-cis-aconitate + H2O. The enzyme catalyses citrate = D-threo-isocitrate. Its pathway is organic acid metabolism; propanoate degradation. The protein operates within carbohydrate metabolism; tricarboxylic acid cycle; isocitrate from oxaloacetate: step 1/2. Its function is as follows. Involved in the catabolism of short chain fatty acids (SCFA) via the tricarboxylic acid (TCA)(acetyl degradation route) and via the 2-methylcitrate cycle I (propionate degradation route). Catalyzes the dehydration of 2-methylcitrate (2-MC) to yield the cis isomer of 2-methyl-aconitate. Could also catalyze the dehydration of citrate and the hydration of cis-aconitate. This is 2-methylcitrate dehydratase from Mycobacterium tuberculosis (strain ATCC 35801 / TMC 107 / Erdman).